The sequence spans 1002 residues: Solute carrier family 12 member 3 (1002 aa).

Residues 1-135 (MAELPVTELP…KSPGEPVRFG (135 aa)) lie on the Cytoplasmic side of the membrane. Ser-41 is subject to Phosphoserine. Thr-44 carries the post-translational modification Phosphothreonine. The residue at position 47 (Ser-47) is a Phosphoserine. Phosphothreonine occurs at positions 48, 53, and 58. 2 positions are modified to phosphoserine: Ser-71 and Ser-89. Residue Thr-122 is modified to Phosphothreonine. Ser-124 is modified (phosphoserine). A discontinuously helical membrane pass occupies residues 136-165 (WVKGVMIRCMLNIWGVILYLRLPWITAQAG). Na(+) contacts are provided by Leu-146 and Trp-149. The helical transmembrane segment at 166–187 (IVLTWLIILLSVMVTSITGLSI) threads the bilayer. Over 188 to 218 (SAISTNGKVKSGGTYFLISRSLGPELGGSIG) the chain is Cytoplasmic. The chain crosses the membrane as a helical span at residues 219-241 (LIFAFANAVGVAMHTVGFAETVR). Residues 242–253 (DLLQEYGTPIVD) lie on the Extracellular side of the membrane. The next 2 membrane-spanning stretches (helical) occupy residues 254-278 (PIND…AGME) and 279-301 (WESK…YLVG). The Extracellular segment spans residues 302–336 (TLIPASEDKASKGFYSYHGDIFVQNLVPDWRGIDG). Residues 337-358 (SFFGMFSIFFPSATGILAGANI) form a discontinuously helical membrane-spanning segment. Gly-351, Ile-352, and Leu-353 together coordinate chloride. The Cytoplasmic segment spans residues 359–369 (SGDLKDPAVAI). A helical transmembrane segment spans residues 370-391 (PKGTLMAIFWTTISYLAISATI). At 392 to 451 (GSCVVRDASGDVNDTMTPGPGPCEGLACGYGWNFTECSQQRSCRYGLINYYQTMSMVSAF) the chain is on the extracellular side. Asn-404 carries N-linked (GlcNAc...) asparagine glycosylation. Cys-414 and Cys-419 form a disulfide bridge. An N-linked (GlcNAc...) asparagine glycan is attached at Asn-424. Cys-428 and Cys-434 are oxidised to a cystine. The chain crosses the membrane as a helical span at residues 452–475 (APLITAGIFGATLSSALACLVSAA). Residues Ala-462, Ser-465, and Ser-466 each contribute to the Na(+) site. The Cytoplasmic segment spans residues 476-505 (KVFQCLCEDQLYPLIGFFGKGYGKNREPVR). The chain crosses the membrane as a helical span at residues 506–520 (GYLLAYAIAVAFIII). The Extracellular portion of the chain corresponds to 521-525 (AELNT). The helical transmembrane segment at 526–542 (IAPIISNFFLCSYALIN) threads the bilayer. Tyr-538 lines the chloride pocket. The Cytoplasmic segment spans residues 543 to 565 (FSCFHASITNSPGWRPSFRYYSK). Helical transmembrane passes span 566 to 585 (WAAL…LTWW) and 586 to 597 (AALIAIGVVLFL). At 598 to 1002 (LLYVIYKKPE…QENVLTFYCQ (405 aa)) the chain is on the cytoplasmic side. Positions 613 to 628 (SVQAGSYNLALSYSVG) are scissor helix. 6 residues coordinate ATP: Leu-646, Arg-653, Val-675, Gly-739, Leu-778, and Asn-779.

This sequence belongs to the SLC12A transporter family. In terms of assembly, homodimer; adopts a domain-swap conformation at the scissor helices connecting the transmembrane domain and C-terminal domain. Interacts with KLHL3. Interacts with IL18R1; this interaction is increased by IL18 treatment. In terms of processing, ubiquitinated; ubiquitination is essential for regulation of endocytosis. Post-translationally, phosphorylated at Thr-53, Thr-58 and Ser-71 by OXSR1/OSR1 and STK39/SPAK downstream of WNK4, promoting its activity. Phosphorylated in response to IL18. In terms of tissue distribution, expressed predominantly in kidney, including in distal tubules (at protein level). Detected at low levels in heart, lung and liver. Not detected in normal aorta, but abundantly expressed in fatty streaks and advanced atherosclerotic lesions. In atherosclerotic lesions, expressed in macrophages, smooth muscle cells and endothelial cells (at protein level).

The protein resides in the cell membrane. It is found in the apical cell membrane. It catalyses the reaction chloride(out) + Na(+)(out) = chloride(in) + Na(+)(in). Phosphorylation by OXSR1/OSR1 and STK39/SPAK in kidney distal convoluted tubules promotes its activity. Also activated by OXSR1/OSR1 and STK39/SPAK downstream of WNK3. Inhibited by thiazide-type diuretic metolazone. Thiazide drugs, such as polythiazide, specifically inhibit SLC12A3/NCC transporter activity by competing with chloride for binding. Functionally, electroneutral sodium and chloride ion cotransporter, which acts as a key mediator of sodium and chloride reabsorption in kidney distal convoluted tubules. Also acts as a receptor for the pro-inflammatory cytokine IL18, thereby contributing to IL18-induced cytokine production, including IFNG, IL6, IL18 and CCL2. May act either independently of IL18R1, or in a complex with IL18R1. The sequence is that of Solute carrier family 12 member 3 from Mus musculus (Mouse).